Consider the following 40-residue polypeptide: Photosystem II reaction center protein J (40 aa).

Residues 8-28 (IPLWLIGTVTGILVIGLLGIF) traverse the membrane as a helical segment.

This sequence belongs to the PsbJ family. In terms of assembly, PSII is composed of 1 copy each of membrane proteins PsbA, PsbB, PsbC, PsbD, PsbE, PsbF, PsbH, PsbI, PsbJ, PsbK, PsbL, PsbM, PsbT, PsbX, PsbY, PsbZ, Psb30/Ycf12, at least 3 peripheral proteins of the oxygen-evolving complex and a large number of cofactors. It forms dimeric complexes.

The protein localises to the plastid. It localises to the chloroplast thylakoid membrane. Its function is as follows. One of the components of the core complex of photosystem II (PSII). PSII is a light-driven water:plastoquinone oxidoreductase that uses light energy to abstract electrons from H(2)O, generating O(2) and a proton gradient subsequently used for ATP formation. It consists of a core antenna complex that captures photons, and an electron transfer chain that converts photonic excitation into a charge separation. In Angiopteris evecta (Mule's foot fern), this protein is Photosystem II reaction center protein J.